A 212-amino-acid chain; its full sequence is Lipid A acyltransferase PagP (212 aa).

Positions 1-24 are cleaved as a signal peptide; it reads MYLKRTLITLSLITLPIVPFLSYA. A compositionally biased stretch (polar residues) spans 36–47; sequence NLAPVTVDSSDP. The tract at residues 36–56 is disordered; that stretch reads NLAPVTVDSSDPVSDKQGESW. Residues H84, D127, and S128 contribute to the active site.

This sequence belongs to the lipid A palmitoyltransferase family. As to quaternary structure, homodimer.

Its subcellular location is the cell outer membrane. The enzyme catalyses a lipid A + a 1,2-diacyl-sn-glycero-3-phosphocholine = a hepta-acyl lipid A + a 2-acyl-sn-glycero-3-phosphocholine. The catalysed reaction is a lipid IVA + a 1,2-diacyl-sn-glycero-3-phosphocholine = a lipid IVB + a 2-acyl-sn-glycero-3-phosphocholine. It carries out the reaction a lipid IIA + a 1,2-diacyl-sn-glycero-3-phosphocholine = a lipid IIB + a 2-acyl-sn-glycero-3-phosphocholine. Transfers a fatty acid residue from the sn-1 position of a phospholipid to the N-linked hydroxyfatty acid chain on the proximal unit of lipid A or its precursors. The polypeptide is Lipid A acyltransferase PagP (Pectobacterium carotovorum subsp. carotovorum (strain PC1)).